We begin with the raw amino-acid sequence, 173 residues long: MEHSGILASLILIAVLPQGSPFKIQVTEYEDKVFVTCNTSVMHLDGTVEGWFAKNKTLNLGKGVLDPRGIYLCNGTEQLAKVVSSVQVHYRMCQNCVELDSGTMAGVIFIDLIATLLLALGVYCFAGHETGRPSGAAEVQALLKNEQLYQPLRDREDTQYSRLGGNWPRNKKS.

The signal sequence occupies residues 1-21 (MEHSGILASLILIAVLPQGSP). At 22–105 (FKIQVTEYED…CVELDSGTMA (84 aa)) the chain is on the extracellular side. Cysteine 37 and cysteine 73 are disulfide-bonded. Residues asparagine 38, asparagine 55, and asparagine 74 are each glycosylated (N-linked (GlcNAc...) asparagine). The chain crosses the membrane as a helical span at residues 106–126 (GVIFIDLIATLLLALGVYCFA). At 127-173 (GHETGRPSGAAEVQALLKNEQLYQPLRDREDTQYSRLGGNWPRNKKS) the chain is on the cytoplasmic side. The region spanning 138 to 166 (EVQALLKNEQLYQPLRDREDTQYSRLGGN) is the ITAM domain. Residues tyrosine 149 and tyrosine 160 each carry the phosphotyrosine modification.

The TCR-CD3 complex is composed of a CD3D/CD3E and a CD3G/CD3E heterodimers that preferentially associate with TCRalpha and TCRbeta, respectively, to form TCRalpha/CD3E/CD3G and TCRbeta/CD3G/CD3E trimers. In turn, the hexamer interacts with CD3Z homodimer to form the TCR-CD3 complex. Alternatively, TCRalpha and TCRbeta can be replaced by TCRgamma and TCRdelta. Interacts with coreceptors CD4 and CD8. Phosphorylated on Tyr residues after T-cell receptor triggering by LCK in association with CD4/CD8.

It is found in the membrane. Functionally, part of the TCR-CD3 complex present on T-lymphocyte cell surface that plays an essential role in adaptive immune response. When antigen presenting cells (APCs) activate T-cell receptor (TCR), TCR-mediated signals are transmitted across the cell membrane by the CD3 chains CD3D, CD3E, CD3G and CD3Z. All CD3 chains contain immunoreceptor tyrosine-based activation motifs (ITAMs) in their cytoplasmic domain. Upon TCR engagement, these motifs become phosphorylated by Src family protein tyrosine kinases LCK and FYN, resulting in the activation of downstream signaling pathways. In addition of this role of signal transduction in T-cell activation, CD3D plays an essential role in thymocyte differentiation. Indeed, participates in correct intracellular TCR-CD3 complex assembly and surface expression. In absence of a functional TCR-CD3 complex, thymocytes are unable to differentiate properly. Interacts with CD4 and CD8 and thus serves to establish a functional link between the TCR and coreceptors CD4 and CD8, which is needed for activation and positive selection of CD4 or CD8 T-cells. This is T-cell surface glycoprotein CD3 delta chain (Cd3d) from Mus musculus (Mouse).